The chain runs to 873 residues: DNA mismatch repair protein MutS (873 aa).

601–608 contacts ATP; the sequence is GPNMSGKS.

Belongs to the DNA mismatch repair MutS family.

Functionally, this protein is involved in the repair of mismatches in DNA. It is possible that it carries out the mismatch recognition step. This protein has a weak ATPase activity. This is DNA mismatch repair protein MutS from Staphylococcus epidermidis (strain ATCC 12228 / FDA PCI 1200).